Consider the following 461-residue polypeptide: Nuclear distribution protein PAC1 (461 aa).

Residues 9–41 enclose the LisH domain; sequence QAEELHKAIIAYLSANNLSSSATALRTELGLAE. Positions 61 to 88 form a coiled coil; that stretch reads TSVVRLQKKIMDLESRNNALQSELDNAT. 8 WD repeats span residues 114-155, 157-197, 201-248, 251-290, 295-355, 357-396, 401-444, and 446-461; these read SHQN…RTIK, HTRP…KNIR, GHDH…CLKT, GHTAWIRDVYPSLDGRYLLSTGDDSTVRLWDLSVTNPENR, GHDH…LKTL, GHDNWVRALVFHPGGRYLLSVSDDKTLRCWDLEQDGKCVK, VHER…VRIR, and VIATGSVDMKLRIFAN.

It belongs to the WD repeat LIS1/nudF family. As to quaternary structure, self-associates. Interacts with NDL1 and dynein.

The protein resides in the cytoplasm. It localises to the cytoskeleton. The protein localises to the spindle pole. In terms of biological role, positively regulates the activity of the minus-end directed microtubule motor protein dynein. May enhance dynein-mediated microtubule sliding by targeting dynein to the microtubule plus end. Required for nuclear migration during vegetative growth as well as development. Required for retrograde early endosome (EE) transport from the hyphal tip. Required for localization of dynein to the mitotic spindle poles. Recruits additional proteins to the dynein complex at SPBs. This Pyricularia oryzae (strain 70-15 / ATCC MYA-4617 / FGSC 8958) (Rice blast fungus) protein is Nuclear distribution protein PAC1.